The chain runs to 215 residues: Porin MspB (215 aa).

The N-terminal stretch at 1 to 31 is a signal peptide; it reads MTAFKRVLIAMISALLAGTTGMFVSAGAAHA.

This sequence belongs to the mycobacterial porin (TC 1.B.24) family. Octamers. Probably forms a goblet with the wide end on the exterior of the outer membrane and a central channel. It is not known if mixed oligomers of MspB with other Msp subunits form in vivo.

Its subcellular location is the cell outer membrane. It is found in the secreted. It localises to the cell wall. In terms of biological role, a backup porin induced when MspA, the major porin, is deleted. Probably forms a water-filled channel which favors the permeation of cations. There are about 2400 porins in wild-type, 800 in an mspA deletion and 150 in a double mspA-mspC deletion. A triple mspA-mspC-mspD deletion mutant has low but detectable channel activity. Different conductance values with maxima at 2.3 and 4.6 nanosiemens might be caused by a simultaneous reconstitution of MspB channels into the membrane or by the existence of different MspB conformations. In Mycolicibacterium smegmatis (strain ATCC 700084 / mc(2)155) (Mycobacterium smegmatis), this protein is Porin MspB (mspB).